The chain runs to 248 residues: Ribonuclease 3 (248 aa).

In terms of domain architecture, RNase III spans 16 to 145 (TEGLETSIGY…LLAAMYLDGG (130 aa)). Glu58 serves as a coordination point for Mg(2+). The active site involves Asp62. Mg(2+) contacts are provided by Asn131 and Glu134. Glu134 is an active-site residue. The region spanning 172-241 (DFKTDFQELA…ARQCLERLET (70 aa)) is the DRBM domain.

Belongs to the ribonuclease III family. Homodimer. Mg(2+) is required as a cofactor.

It localises to the cytoplasm. The catalysed reaction is Endonucleolytic cleavage to 5'-phosphomonoester.. In terms of biological role, digests double-stranded RNA. Involved in the processing of primary rRNA transcript to yield the immediate precursors to the large and small rRNAs (23S and 16S). Processes some mRNAs, and tRNAs when they are encoded in the rRNA operon. Processes pre-crRNA and tracrRNA of type II CRISPR loci if present in the organism. This chain is Ribonuclease 3, found in Geobacter sulfurreducens (strain ATCC 51573 / DSM 12127 / PCA).